We begin with the raw amino-acid sequence, 454 residues long: N-myc 2 proto-oncogene protein (454 aa).

Disordered stretches follow at residues 132-166 (SEKM…HSGT), 230-269 (VAAP…DEEE), and 325-374 (PSPY…VRRR). Residues 151 to 161 (PGAGAASPAGR) show a composition bias toward low complexity. Acidic residues predominate over residues 256-269 (ALSDEVDEEEDEEE). Positions 363-374 (RKSDSEDSVRRR) are enriched in basic and acidic residues. One can recognise a bHLH domain in the interval 371–423 (VRRRNHNILERQRRNDLRSSFTTLRDHVPELVKNEKAAKVVILKKACEYVHYL). Residues 423 to 444 (LQAKEHQLLMEKEKLQARQQQL) form a leucine-zipper region.

As to quaternary structure, efficient DNA binding requires dimerization with another bHLH protein.

The protein resides in the nucleus. The chain is N-myc 2 proto-oncogene protein (N-MYC2) from Marmota monax (Woodchuck).